We begin with the raw amino-acid sequence, 438 residues long: MRRRSKKIKTENNSNPETSEERNKFDEIPHDLVIEILERLPLKSVARFLTVSKLWATTIRSPDFRKSYRGGSSSEPRTLIVSDLNFKEPNPKLHFFRPSISSPSFLSSLTCPFTYPRHEEYYYHHVNGLISVGYGTDQIVINPTTGKFITLPRPKTRRKLVISFFGYDSVSDQYKVLCMTERLRGHPEEASSQHQVYTLGAKQKSWKMINCSIPHRPWSWNAVCINGVVYYIAKTGEGMFRRCLMRFDLKSDNLDLCTILPEEIQTSLHDYFLINYKGKVAIPNQPNFYTYDVWVMNQEGGKIEWLKNITFTIKPRKGFVRYLFVTGTTHTGEFILAPTSYTDEFYVFHYNPDMNSFRKIRVQAPGVKFSFAQKASVVFSDHSLLRLDNLHIRGSTHTATGEFILAPRFYSDDLNVIHFNPDTNSFRSTKVEVYEDYE.

Residues 1–24 (MRRRSKKIKTENNSNPETSEERNK) form a disordered region. An F-box domain is found at 22 to 68 (RNKFDEIPHDLVIEILERLPLKSVARFLTVSKLWATTIRSPDFRKSY).

This is Putative F-box protein At5g15660 from Arabidopsis thaliana (Mouse-ear cress).